The sequence spans 287 residues: ATP synthase gamma chain (287 aa).

Belongs to the ATPase gamma chain family. As to quaternary structure, F-type ATPases have 2 components, CF(1) - the catalytic core - and CF(0) - the membrane proton channel. CF(1) has five subunits: alpha(3), beta(3), gamma(1), delta(1), epsilon(1). CF(0) has three main subunits: a, b and c.

The protein localises to the cell inner membrane. Produces ATP from ADP in the presence of a proton gradient across the membrane. The gamma chain is believed to be important in regulating ATPase activity and the flow of protons through the CF(0) complex. The chain is ATP synthase gamma chain from Enterobacter sp. (strain 638).